The primary structure comprises 705 residues: Voltage-dependent calcium channel beta subunit-associated regulatory protein (705 aa).

Residues 1 to 45 are Extracellular-facing; the sequence is MQPTATMATAATTTTTTTATVALTTSWDNATGRPTAEPDPILDNY. N-linked (GlcNAc...) asparagine glycosylation is present at Asn29. A helical; Signal-anchor for type III membrane protein transmembrane segment spans residues 46-66; that stretch reads VLLVVVMSLFVGGTLVVLSGV. Residues 67 to 705 are Cytoplasmic-facing; that stretch reads LLLCKRCWDV…APTSPDHSPA (639 aa). 2 disordered regions span residues 91 to 113 and 212 to 284; these read TTTY…EDPE and GKAL…GSGA. A compositionally biased stretch (polar residues) spans 245-254; that stretch reads PSASSDSGEG. The segment covering 267–284 has biased composition (gly residues); the sequence is GGPGAAAGPGEAGPGSGA. Residues Ser299 and Ser304 each carry the phosphoserine modification. Disordered stretches follow at residues 316–353, 369–436, 448–540, and 559–655; these read PSQR…DAPQ, FPHP…SYRD, AAAS…RRDY, and HFDD…CPGS. The segment covering 344–353 has biased composition (acidic residues); sequence TEQEEGDAPQ. Over residues 371 to 382 the composition is skewed to pro residues; sequence HPRPFLASPPPA. The span at 383 to 397 shows a compositional bias: low complexity; it reads LGRLEAAEAAGGASP. Residues 479–488 are compositionally biased toward pro residues; that stretch reads AFPPPSPPAP. Residues 489–499 show a composition bias toward basic and acidic residues; that stretch reads RPKDGEARRLL. 2 positions are modified to phosphoserine: Ser507 and Ser528. The segment covering 567-585 has biased composition (basic residues); that stretch reads ARHRARAHPHARKQWQRGR. Positions 591–614 are enriched in low complexity; it reads GARAAPALAGTPAPPAGAARPARA. Position 621 is a phosphoserine (Ser621). Thr698 carries the phosphothreonine modification. Phosphoserine is present on residues Ser699 and Ser703.

As to quaternary structure, interacts with voltage-dependent calcium channels CACNB1, CACNB2, CACNB3 and CACNB4 beta subunits; prevents their interaction with the CACNA1C alpha subunit thereby negatively regulating the activity of the corresponding calcium channels.

It localises to the cytoplasmic vesicle. It is found in the secretory vesicle. The protein localises to the synaptic vesicle membrane. The protein resides in the cell membrane. Its subcellular location is the cell projection. It localises to the growth cone. Its function is as follows. Negatively regulates voltage-gated calcium channels by preventing the interaction between their alpha and beta subunits. Thereby, negatively regulates calcium channels activity at the plasma membrane and indirectly inhibits calcium-regulated exocytosis. In Homo sapiens (Human), this protein is Voltage-dependent calcium channel beta subunit-associated regulatory protein.